We begin with the raw amino-acid sequence, 153 residues long: Putative ATP synthase subunit f, mitochondrial (153 aa).

This sequence belongs to the ATPase F chain family. In terms of assembly, subunit of the F-type ATPase which has 2 components, CF(1) - the catalytic core - and CF(0) - the membrane proton channel.

It is found in the mitochondrion membrane. Its function is as follows. Mitochondrial membrane ATP synthase (F(1)F(0) ATP synthase or Complex V) produces ATP from ADP in the presence of a proton gradient across the membrane which is generated by electron transport complexes of the respiratory chain. F-type ATPases consist of two structural domains, F(1) - containing the extramembraneous catalytic core and F(0) - containing the membrane proton channel, linked together by a central stalk and a peripheral stalk. During catalysis, ATP synthesis in the catalytic domain of F(1) is coupled via a rotary mechanism of the central stalk subunits to proton translocation. Part of the complex F(0) domain. Minor subunit located with subunit a in the membrane. In Caenorhabditis elegans, this protein is Putative ATP synthase subunit f, mitochondrial.